The primary structure comprises 176 residues: Ribosome rescue factor SmrB (176 aa).

The Smr domain maps to 93–168; that stretch reads LDLHGYRQSE…GDAALLVLID (76 aa).

Belongs to the SmrB family. Associates with collided ribosomes, but not with correctly translating polysomes.

Functionally, acts as a ribosome collision sensor. Detects stalled/collided disomes (pairs of ribosomes where the leading ribosome is stalled and a second ribosome has collided with it) and endonucleolytically cleaves mRNA at the 5' boundary of the stalled ribosome. Stalled/collided disomes form a new interface (primarily via the 30S subunits) that binds SmrB. Cleaved mRNA becomes available for tmRNA ligation, leading to ribosomal subunit dissociation and rescue of stalled ribosomes. The protein is Ribosome rescue factor SmrB of Shewanella baltica (strain OS155 / ATCC BAA-1091).